Consider the following 194-residue polypeptide: Probable GTP-binding protein EngB (194 aa).

Residues Asp22 to Glu194 enclose the EngB-type G domain. Residues Gly30–Ser37, Gly57–Thr61, Asp75–Gly78, Thr142–Asp145, and Phe174–Ser176 contribute to the GTP site. Residues Ser37 and Thr59 each coordinate Mg(2+).

Belongs to the TRAFAC class TrmE-Era-EngA-EngB-Septin-like GTPase superfamily. EngB GTPase family. It depends on Mg(2+) as a cofactor.

Functionally, necessary for normal cell division and for the maintenance of normal septation. This is Probable GTP-binding protein EngB from Listeria monocytogenes serovar 1/2a (strain ATCC BAA-679 / EGD-e).